We begin with the raw amino-acid sequence, 1122 residues long: AP-4 complex subunit epsilon-1 (1122 aa).

The residue at position 699 (Ser-699) is a Phosphoserine. Composition is skewed to basic and acidic residues over residues 714–728 and 745–760; these read YLPKKESGTGDKPEA and TTRKDQAQGHIPSTEE. 2 disordered regions span residues 714-760 and 797-861; these read YLPK…STEE and SKLK…AEKL. An interaction with TEPSIN region spans residues 726–1122; the sequence is PEASHVPAEG…CHCQKVMQTS (397 aa). A compositionally biased stretch (low complexity) spans 841–853; the sequence is ELSSELFRSESLS. Ser-851 carries the post-translational modification Phosphoserine.

Belongs to the adaptor complexes large subunit family. As to quaternary structure, adaptor protein complex 4 (AP-4) is a heterotetramer composed of two large adaptins (epsilon-type subunit AP4E1 and beta-type subunit AP4B1), a medium adaptin (mu-type subunit AP4M1) and a small adaptin (sigma-type AP4S1). Interacts with TEPSIN. Interacts with GRIA2; probably indirect it mediates the somatodendritic localization of GRIA2 in neurons.

It is found in the golgi apparatus. It localises to the trans-Golgi network membrane. Component of the adaptor protein complex 4 (AP-4). Adaptor protein complexes are vesicle coat components involved both in vesicle formation and cargo selection. They control the vesicular transport of proteins in different trafficking pathways. AP-4 forms a non clathrin-associated coat on vesicles departing the trans-Golgi network (TGN) and may be involved in the targeting of proteins from the trans-Golgi network (TGN) to the endosomal-lysosomal system. It is also involved in protein sorting to the basolateral membrane in epithelial cells and the proper asymmetric localization of somatodendritic proteins in neurons. AP-4 is involved in the recognition and binding of tyrosine-based sorting signals found in the cytoplasmic part of cargos, but may also recognize other types of sorting signal. This Mus musculus (Mouse) protein is AP-4 complex subunit epsilon-1.